We begin with the raw amino-acid sequence, 120 residues long: Holo-[acyl-carrier-protein] synthase (120 aa).

Mg(2+) is bound by residues Asp-8 and Glu-58.

The protein belongs to the P-Pant transferase superfamily. AcpS family. It depends on Mg(2+) as a cofactor.

The protein resides in the cytoplasm. It catalyses the reaction apo-[ACP] + CoA = holo-[ACP] + adenosine 3',5'-bisphosphate + H(+). Its function is as follows. Transfers the 4'-phosphopantetheine moiety from coenzyme A to a Ser of acyl-carrier-protein. The protein is Holo-[acyl-carrier-protein] synthase of Streptococcus pneumoniae (strain Hungary19A-6).